The primary structure comprises 668 residues: Fructose-1,6-bisphosphatase class 3 (668 aa).

This sequence belongs to the FBPase class 3 family. The cofactor is Mn(2+).

It catalyses the reaction beta-D-fructose 1,6-bisphosphate + H2O = beta-D-fructose 6-phosphate + phosphate. It participates in carbohydrate biosynthesis; gluconeogenesis. The sequence is that of Fructose-1,6-bisphosphatase class 3 from Clostridium botulinum (strain ATCC 19397 / Type A).